Consider the following 89-residue polypeptide: Large ribosomal subunit protein eL43 (89 aa).

Zn(2+)-binding residues include Cys-38, Cys-41, Cys-56, and Cys-59. Residues 38–59 (CPSCDRPGVKRESRGIWKCRKC) form a C4-type zinc finger.

It belongs to the eukaryotic ribosomal protein eL43 family. Putative zinc-binding subfamily. As to quaternary structure, part of the 50S ribosomal subunit. It depends on Zn(2+) as a cofactor.

Functionally, binds to the 23S rRNA. The polypeptide is Large ribosomal subunit protein eL43 (Methanothermobacter thermautotrophicus (strain ATCC 29096 / DSM 1053 / JCM 10044 / NBRC 100330 / Delta H) (Methanobacterium thermoautotrophicum)).